The primary structure comprises 492 residues: GTPase Der (492 aa).

Residues 3 to 166 (PVIALVGRPN…AVLGIFPKDA (164 aa)) enclose the EngA-type G 1 domain. Residues 9 to 16 (GRPNVGKS), 56 to 60 (DTGGI), and 118 to 121 (NKVD) contribute to the GTP site. The disordered stretch occupies residues 166–190 (AGEPEEGAEAEEEVQEGQEAKRIPG). Acidic residues predominate over residues 168-181 (EPEEGAEAEEEVQE). The EngA-type G 2 domain maps to 197–370 (IKLAIIGRPN…SVQAAFHSAV (174 aa)). GTP is bound by residues 203–210 (GRPNVGKS), 250–254 (DTAGV), and 315–318 (NKWD). The KH-like domain occupies 371-455 (TRWPTSRLTQ…PIRIEYKGGE (85 aa)). The disordered stretch occupies residues 453-492 (GGENPYEGNKNKLTDRQVNKKRRLMSHHKKAEKKRKDKRK). The segment covering 461–470 (NKNKLTDRQV) has biased composition (basic and acidic residues). The span at 471–492 (NKKRRLMSHHKKAEKKRKDKRK) shows a compositional bias: basic residues.

The protein belongs to the TRAFAC class TrmE-Era-EngA-EngB-Septin-like GTPase superfamily. EngA (Der) GTPase family. In terms of assembly, associates with the 50S ribosomal subunit.

Its function is as follows. GTPase that plays an essential role in the late steps of ribosome biogenesis. The chain is GTPase Der from Ectopseudomonas mendocina (strain ymp) (Pseudomonas mendocina).